A 314-amino-acid polypeptide reads, in one-letter code: Olfactory receptor 5P72 (314 aa).

At 1–28 the chain is on the extracellular side; the sequence is MAFLEVGNHTAVTEFILLGLTDDPVLRV. Residue Asn8 is glycosylated (N-linked (GlcNAc...) asparagine). Residues 29 to 49 form a helical membrane-spanning segment; sequence VLFTIILCIYLVTVMGNLSTI. Residues 50–57 are Cytoplasmic-facing; sequence LLIRVSSQ. A helical transmembrane segment spans residues 58–78; the sequence is LHHPMYFFLSHLASVDMGLSS. At 79–102 the chain is on the extracellular side; that stretch reads SVTPNMLLNFLIERNTISYLGCGI. Cys100 and Cys192 are disulfide-bonded. A helical transmembrane segment spans residues 103–123; it reads QQSLADFFGSVECFLLAAMAY. Over 124-136 the chain is Cytoplasmic; it reads DRFMAICNPLLYS. A helical membrane pass occupies residues 137–157; that stretch reads TKMSTKVCVQLVVGSYIGGFL. Residues 158 to 199 are Extracellular-facing; that stretch reads NASLIMFYFFSFLFCGPNRVDHFFCDFAPLVELSCSDVSVSV. The helical transmembrane segment at 200–220 threads the bilayer; that stretch reads IVISFSAGSVTMITVFVIAVS. Over 221–240 the chain is Cytoplasmic; it reads YSYILITILKMHSIEGRHKA. The chain crosses the membrane as a helical span at residues 241-261; it reads FSTCTSHLTAVTLYYGTITFI. Topologically, residues 262 to 274 are extracellular; that stretch reads YVMPKSSFSTDQN. The chain crosses the membrane as a helical span at residues 275–295; sequence KVVSVFYMVMIPMLNPLIYSL. The Cytoplasmic segment spans residues 296–314; sequence RNNEIKGAIKRQLGKKMSC.

It belongs to the G-protein coupled receptor 1 family.

It is found in the cell membrane. Functionally, potential odorant receptor. This Mus musculus (Mouse) protein is Olfactory receptor 5P72.